The sequence spans 163 residues: Phosphopantetheine adenylyltransferase (163 aa).

Thr-9 lines the substrate pocket. Residues 9-10 and His-17 contribute to the ATP site; that span reads TF. 3 residues coordinate substrate: Lys-41, Leu-76, and Arg-90. ATP contacts are provided by residues 91 to 93, Glu-101, and 126 to 132; these read GLR and YSFISST.

This sequence belongs to the bacterial CoaD family. As to quaternary structure, homohexamer. Mg(2+) serves as cofactor.

It localises to the cytoplasm. The enzyme catalyses (R)-4'-phosphopantetheine + ATP + H(+) = 3'-dephospho-CoA + diphosphate. The protein operates within cofactor biosynthesis; coenzyme A biosynthesis; CoA from (R)-pantothenate: step 4/5. In terms of biological role, reversibly transfers an adenylyl group from ATP to 4'-phosphopantetheine, yielding dephospho-CoA (dPCoA) and pyrophosphate. This Dichelobacter nodosus (strain VCS1703A) protein is Phosphopantetheine adenylyltransferase.